Reading from the N-terminus, the 425-residue chain is Serine--tRNA ligase (425 aa).

230-232 (TAE) lines the L-serine pocket. Residue 261 to 263 (RAE) coordinates ATP. L-serine is bound at residue glutamate 284. 348–351 (EISS) is a binding site for ATP. Residue serine 384 coordinates L-serine.

This sequence belongs to the class-II aminoacyl-tRNA synthetase family. Type-1 seryl-tRNA synthetase subfamily. Homodimer. The tRNA molecule binds across the dimer.

The protein resides in the cytoplasm. The enzyme catalyses tRNA(Ser) + L-serine + ATP = L-seryl-tRNA(Ser) + AMP + diphosphate + H(+). It carries out the reaction tRNA(Sec) + L-serine + ATP = L-seryl-tRNA(Sec) + AMP + diphosphate + H(+). Its pathway is aminoacyl-tRNA biosynthesis; selenocysteinyl-tRNA(Sec) biosynthesis; L-seryl-tRNA(Sec) from L-serine and tRNA(Sec): step 1/1. In terms of biological role, catalyzes the attachment of serine to tRNA(Ser). Is also able to aminoacylate tRNA(Sec) with serine, to form the misacylated tRNA L-seryl-tRNA(Sec), which will be further converted into selenocysteinyl-tRNA(Sec). In Desulforudis audaxviator (strain MP104C), this protein is Serine--tRNA ligase.